Consider the following 299-residue polypeptide: ATP phosphoribosyltransferase (299 aa).

The protein belongs to the ATP phosphoribosyltransferase family. Long subfamily. Mg(2+) is required as a cofactor.

Its subcellular location is the cytoplasm. It carries out the reaction 1-(5-phospho-beta-D-ribosyl)-ATP + diphosphate = 5-phospho-alpha-D-ribose 1-diphosphate + ATP. It participates in amino-acid biosynthesis; L-histidine biosynthesis; L-histidine from 5-phospho-alpha-D-ribose 1-diphosphate: step 1/9. With respect to regulation, feedback inhibited by histidine. Catalyzes the condensation of ATP and 5-phosphoribose 1-diphosphate to form N'-(5'-phosphoribosyl)-ATP (PR-ATP). Has a crucial role in the pathway because the rate of histidine biosynthesis seems to be controlled primarily by regulation of HisG enzymatic activity. This is ATP phosphoribosyltransferase from Campylobacter jejuni subsp. jejuni serotype O:6 (strain 81116 / NCTC 11828).